The sequence spans 133 residues: uncharacterized protein (133 aa).

This is an uncharacterized protein from Methanothermobacter marburgensis (strain ATCC BAA-927 / DSM 2133 / JCM 14651 / NBRC 100331 / OCM 82 / Marburg) (Methanobacterium thermoautotrophicum).